The sequence spans 247 residues: MTDPATDTTRRNVHDHEVAKFDAAASRWWDPQGECKPLHDINPLRLDYVAQCLGGLEGRRILDVGCGGGLLAEGMARRGAEVTGIDMSKAALQVARLHALEMEVEVAYRQITVEELADSDEPRFDAVTCLEMLEHVPDPASAVHACARLVKPGGHVIFSTLNRNPKSYLFAILGAEYLLQLLPKGTHDWQQFIRPSELDRWAREADLVLRSMKGLTYNPLNQRYKLTDDTSVNYLAHYQHSPARAGS.

S-adenosyl-L-methionine is bound by residues R45, G65, D86, and L130.

It belongs to the methyltransferase superfamily. UbiG/COQ3 family.

It carries out the reaction a 3-demethylubiquinol + S-adenosyl-L-methionine = a ubiquinol + S-adenosyl-L-homocysteine + H(+). It catalyses the reaction a 3-(all-trans-polyprenyl)benzene-1,2-diol + S-adenosyl-L-methionine = a 2-methoxy-6-(all-trans-polyprenyl)phenol + S-adenosyl-L-homocysteine + H(+). Its pathway is cofactor biosynthesis; ubiquinone biosynthesis. Functionally, O-methyltransferase that catalyzes the 2 O-methylation steps in the ubiquinone biosynthetic pathway. The chain is Ubiquinone biosynthesis O-methyltransferase from Alkalilimnicola ehrlichii (strain ATCC BAA-1101 / DSM 17681 / MLHE-1).